We begin with the raw amino-acid sequence, 640 residues long: Probable Ufm1-specific protease (640 aa).

Active-site residues include C467, D591, and H593.

It belongs to the peptidase C78 family.

In terms of biological role, thiol protease which recognizes and hydrolyzes the peptide bond at the C-terminal Gly of ufm-1, a ubiquitin-like modifier protein bound to a number of target proteins. This is Probable Ufm1-specific protease from Oryza sativa subsp. japonica (Rice).